The primary structure comprises 94 residues: DNA-directed RNA polymerase subunit Rpo11 (94 aa).

Belongs to the archaeal Rpo11/eukaryotic RPB11/RPC19 RNA polymerase subunit family. In terms of assembly, part of the RNA polymerase complex.

It is found in the cytoplasm. It carries out the reaction RNA(n) + a ribonucleoside 5'-triphosphate = RNA(n+1) + diphosphate. In terms of biological role, DNA-dependent RNA polymerase (RNAP) catalyzes the transcription of DNA into RNA using the four ribonucleoside triphosphates as substrates. This Thermococcus kodakarensis (strain ATCC BAA-918 / JCM 12380 / KOD1) (Pyrococcus kodakaraensis (strain KOD1)) protein is DNA-directed RNA polymerase subunit Rpo11.